The following is a 312-amino-acid chain: Probable deoxyhypusine synthase (312 aa).

Residue Lys-285 is the Nucleophile of the active site.

The protein belongs to the deoxyhypusine synthase family. It depends on NAD(+) as a cofactor.

The catalysed reaction is [eIF5A protein]-L-lysine + spermidine = [eIF5A protein]-deoxyhypusine + propane-1,3-diamine. The protein operates within protein modification; eIF5A hypusination. Functionally, catalyzes the NAD-dependent oxidative cleavage of spermidine and the subsequent transfer of the butylamine moiety of spermidine to the epsilon-amino group of a specific lysine residue of the eIF-5A precursor protein to form the intermediate deoxyhypusine residue. This chain is Probable deoxyhypusine synthase (dys), found in Saccharolobus solfataricus (strain ATCC 35092 / DSM 1617 / JCM 11322 / P2) (Sulfolobus solfataricus).